Here is a 181-residue protein sequence, read N- to C-terminus: Major urinary protein 11 (181 aa).

An N-terminal signal peptide occupies residues methionine 1 to alanine 19. An intrachain disulfide couples cysteine 83 to cysteine 176.

It belongs to the calycin superfamily. Lipocalin family.

The protein localises to the secreted. Major urinary proteins (Mups) bind pheromones, and thus stabilize them to allow slow release into the air from urine marks. May protect pheromones from oxidation. May also act as pheromones themselves. In this context, they play a role in the regulation of social behaviors, such as aggression, mating, pup-suckling, territory establishment and dominance. Binds the pheromone analog 2-sec-butyl-4,5-dihydrothiazole (SBT) in vitro. This chain is Major urinary protein 11, found in Mus musculus (Mouse).